The chain runs to 154 residues: Insulin-like growth factor 1 (154 aa).

Residues 50–78 (GPETLCGAELVDALQFVCGDRGFYFNKPT) are b. Cystine bridges form between cysteine 55-cysteine 97, cysteine 67-cysteine 110, and cysteine 96-cysteine 101. The interval 79 to 90 (GYGSSSRRAPQT) is c. Residues 91-111 (GIVDECCFRSCDLRRLEMYCA) form an a region. Residues 112 to 119 (PLKPAKSA) form a d region. The propeptide at 120–154 (RSVRAQRHTDMPKAQKEVHLKNTSRGSAGNKNYRM) is e peptide. The interval 121–154 (SVRAQRHTDMPKAQKEVHLKNTSRGSAGNKNYRM) is disordered. The segment covering 126 to 139 (RHTDMPKAQKEVHL) has biased composition (basic and acidic residues). The span at 140–154 (KNTSRGSAGNKNYRM) shows a compositional bias: polar residues.

Belongs to the insulin family. As to quaternary structure, forms a ternary complex with IGFR1 and ITGAV:ITGB3. Forms a ternary complex with IGFR1 and ITGA6:ITGB4. Forms a ternary complex with IGFBP3 and ALS.

The protein localises to the secreted. The insulin-like growth factors, isolated from plasma, are structurally and functionally related to insulin but have a much higher growth-promoting activity. May be a physiological regulator of [1-14C]-2-deoxy-D-glucose (2DG) transport and glycogen synthesis in osteoblasts. Stimulates glucose transport in bone-derived osteoblastic (PyMS) cells and is effective at much lower concentrations than insulin, not only regarding glycogen and DNA synthesis but also with regard to enhancing glucose uptake. May play a role in synapse maturation. Ca(2+)-dependent exocytosis of IGF1 is required for sensory perception of smell in the olfactory bulb. Acts as a ligand for IGF1R. Binds to the alpha subunit of IGF1R, leading to the activation of the intrinsic tyrosine kinase activity which autophosphorylates tyrosine residues in the beta subunit thus initiating a cascade of down-stream signaling events leading to activation of the PI3K-AKT/PKB and the Ras-MAPK pathways. Binds to integrins ITGAV:ITGB3 and ITGA6:ITGB4. Its binding to integrins and subsequent ternary complex formation with integrins and IGFR1 are essential for IGF1 signaling. Induces the phosphorylation and activation of IGFR1, MAPK3/ERK1, MAPK1/ERK2 and AKT1. As part of the MAPK/ERK signaling pathway, acts as a negative regulator of apoptosis in cardiomyocytes via promotion of STUB1/CHIP-mediated ubiquitination and degradation of ICER-type isoforms of CREM. The sequence is that of Insulin-like growth factor 1 from Bos taurus (Bovine).